The following is a 229-amino-acid chain: Ribonuclease HII (229 aa).

One can recognise an RNase H type-2 domain in the interval 34–223; sequence WPVAGADEAG…LRKSEDGPEM (190 aa). 3 residues coordinate a divalent metal cation: Asp-40, Glu-41, and Asp-131. The disordered stretch occupies residues 209-229; the sequence is MSFRPLRKSEDGPEMDELIPE. Residues 220 to 229 are compositionally biased toward acidic residues; sequence GPEMDELIPE.

This sequence belongs to the RNase HII family. Requires Mn(2+) as cofactor. The cofactor is Mg(2+).

It is found in the cytoplasm. It catalyses the reaction Endonucleolytic cleavage to 5'-phosphomonoester.. Its function is as follows. Endonuclease that specifically degrades the RNA of RNA-DNA hybrids. This is Ribonuclease HII from Rhizobium etli (strain CIAT 652).